The following is a 209-amino-acid chain: Kynurenine formamidase (209 aa).

Tryptophan 20 provides a ligand contact to substrate. Residues histidine 50, histidine 54, and aspartate 56 each contribute to the Zn(2+) site. Histidine 60 serves as the catalytic Proton donor/acceptor. Residues histidine 161 and glutamate 173 each contribute to the Zn(2+) site.

Belongs to the Cyclase 1 superfamily. KynB family. As to quaternary structure, homodimer. The cofactor is Zn(2+).

It catalyses the reaction N-formyl-L-kynurenine + H2O = L-kynurenine + formate + H(+). Its pathway is amino-acid degradation; L-tryptophan degradation via kynurenine pathway; L-kynurenine from L-tryptophan: step 2/2. In terms of biological role, catalyzes the hydrolysis of N-formyl-L-kynurenine to L-kynurenine, the second step in the kynurenine pathway of tryptophan degradation. The sequence is that of Kynurenine formamidase from Bacillus thuringiensis subsp. konkukian (strain 97-27).